Consider the following 331-residue polypeptide: FMRFamide-related neuropeptides (331 aa).

A signal peptide spans 1-25 (MRCWSPCSLLVVIVIYCLSSHTSEA). Positions 26–65 (FDLAQACVESQRLSLLPICDTIFAVQQEGAQQSADDGMRS) are excised as a propeptide. A phenylalanine amide mark is found at phenylalanine 71 and phenylalanine 83. Residues 86–94 (NVPDLPFED) constitute a propeptide that is removed on maturation. Residue phenylalanine 100 is modified to Phenylalanine amide. A propeptide spanning residues 103 to 168 (AAPQLDDLLK…YIDDVEDSDV (66 aa)) is cleaved from the precursor. A disordered region spans residues 122 to 158 (QKADETSVRRKRSTDAAPQNNAENPEQKNDSAKITKR). Positions 146–158 (PEQKNDSAKITKR) are enriched in basic and acidic residues. 2 positions are modified to phenylalanine amide: phenylalanine 174 and phenylalanine 181. A propeptide spanning residues 184-194 (NPSDAGNKLTE) is cleaved from the precursor. Phenylalanine 200 carries the post-translational modification Phenylalanine amide. Positions 203-205 (DPE) are excised as a propeptide. The residue at position 211 (phenylalanine 211) is a Phenylalanine amide. Positions 214 to 216 (SDD) are excised as a propeptide. Phenylalanine 222 is modified (phenylalanine amide). Positions 225 to 236 (NPSDVEDELEED) are excised as a propeptide. Position 242 is a phenylalanine amide (phenylalanine 242). A propeptide spanning residues 245-254 (GGEDDEEEAE) is cleaved from the precursor. Residue phenylalanine 260 is modified to Phenylalanine amide. Positions 263–265 (DPE) are excised as a propeptide. At phenylalanine 271 the chain carries Phenylalanine amide. Residues 274–277 (SGED) constitute a propeptide that is removed on maturation. Residues 282–296 (RFGRNPDEQEADKRF) show a composition bias toward basic and acidic residues. The tract at residues 282 to 310 (RFGRNPDEQEADKRFMRFGRGGEDDEVST) is disordered. A Phenylalanine amide modification is found at phenylalanine 283. A propeptide spanning residues 286-293 (NPDEQEAD) is cleaved from the precursor. Phenylalanine 299 carries the phenylalanine amide modification. Residues 302-312 (GGEDDEVSTED) constitute a propeptide that is removed on maturation. A Phenylalanine amide modification is found at phenylalanine 318. A propeptide spanning residues 321-331 (SADKCKGCLEG) is cleaved from the precursor.

Belongs to the FARP (FMRFamide related peptide) family.

Its subcellular location is the secreted. Its function is as follows. Excitatory neurotransmitters that directly modulate chromatophore function by activating chromatophore expansion at the chromatophore neuromuscular junction. In Doryteuthis pealeii (Longfin inshore squid), this protein is FMRFamide-related neuropeptides.